A 118-amino-acid chain; its full sequence is Myotrophin (118 aa).

Cys-2 bears the N-acetylcysteine mark. Residues 2–30 (CDKEFMWALKNGDLDEVKDYVAKGEDVNR) form an ANK 1 repeat. Lys-4, Lys-11, and Lys-24 each carry N6-acetyllysine. Position 31 is a phosphothreonine (Thr-31). ANK repeat units follow at residues 34–66 (GGRK…APDK) and 67–99 (HHIT…VKGP).

The protein belongs to the myotrophin family. In terms of assembly, interacts with the heterodimer formed by CAPZA1 and CAPZB. Interacts with RELA.

It is found in the cytoplasm. Its subcellular location is the nucleus. It localises to the perinuclear region. In terms of biological role, plays a role in the regulation of the growth of actin filaments. Inhibits the activity of the F-actin-capping protein complex formed by the CAPZA1 and CAPZB heterodimer. Promotes dimerization of NF-kappa-B subunits and regulates NF-kappa-B transcription factor activity. Promotes growth of cardiomyocytes, but not cardiomyocyte proliferation. Promotes cardiac muscle hypertrophy. In Rattus norvegicus (Rat), this protein is Myotrophin (Mtpn).